A 324-amino-acid chain; its full sequence is MSVEDGGVPGLGRPRKARWTLMLLLSTAMYGAHAPLLALCHVDGRVPFRPSSAVLLTELTKLLLCALSLLVGWQAWPQGTPPWRQAAPFALSALLYGANNNLVIYLQRYMDPSTYQVLSNLKIGSTALFYCLCLRHRLSARQGLALLLLMAAGACYAAGGLQDPGTTLPGPPSAAATSPMPLHITPLGLLLLILYCLISGLSSVYTELLMKRQRLPLALQNLFLYSFGVLLNLGLHAGGGPGPGLLEGFSGWMALVVLSQALNGLLMSAVMKHGSSITRLFVVSCSLVVNAVLSAALLRLQLTAAFFLATLLIGLAVRLYYGSR.

The Cytoplasmic portion of the chain corresponds to 1–18 (MSVEDGGVPGLGRPRKAR). Residues 19-39 (WTLMLLLSTAMYGAHAPLLAL) traverse the membrane as a helical segment. Topologically, residues 40 to 52 (CHVDGRVPFRPSS) are lumenal. A helical membrane pass occupies residues 53–73 (AVLLTELTKLLLCALSLLVGW). Residues 74–85 (QAWPQGTPPWRQ) lie on the Cytoplasmic side of the membrane. A helical membrane pass occupies residues 86 to 106 (AAPFALSALLYGANNNLVIYL). Residues 107–141 (QRYMDPSTYQVLSNLKIGSTALFYCLCLRHRLSAR) are Lumenal-facing. A helical transmembrane segment spans residues 142 to 162 (QGLALLLLMAAGACYAAGGLQ). At 163 to 180 (DPGTTLPGPPSAAATSPM) the chain is on the cytoplasmic side. Residues 181–201 (PLHITPLGLLLLILYCLISGL) form a helical membrane-spanning segment. Over 202-214 (SSVYTELLMKRQR) the chain is Lumenal. A helical transmembrane segment spans residues 215-235 (LPLALQNLFLYSFGVLLNLGL). Topologically, residues 236–248 (HAGGGPGPGLLEG) are cytoplasmic. The chain crosses the membrane as a helical span at residues 249-271 (FSGWMALVVLSQALNGLLMSAVM). Topologically, residues 272-275 (KHGS) are lumenal. A helical membrane pass occupies residues 276–298 (SITRLFVVSCSLVVNAVLSAALL). The Cytoplasmic portion of the chain corresponds to 299 to 324 (RLQLTAAFFLATLLIGLAVRLYYGSR).

It belongs to the nucleotide-sugar transporter family. SLC35A subfamily. As to quaternary structure, found in a complex with SLC35A2 and SLC35A3.

It is found in the golgi apparatus membrane. It catalyses the reaction CDP-L-ribitol(in) + CDP(out) = CDP-L-ribitol(out) + CDP(in). In terms of biological role, mediates the transport of CDP-ribitol. Does not exhibit CMP-sialic acid, UDP-galactose and UDP-N-acetylglucosamine transport activity. The sequence is that of Probable UDP-sugar transporter protein SLC35A4 from Bos taurus (Bovine).